Here is a 69-residue protein sequence, read N- to C-terminus: uncharacterized protein (69 aa).

2 4Fe-4S ferredoxin-type domains span residues 2-30 and 38-67; these read KIEI…KSKK and PPIP…IELS. Cysteine 10, cysteine 13, cysteine 16, cysteine 20, cysteine 47, cysteine 50, cysteine 53, and cysteine 57 together coordinate [4Fe-4S] cluster.

[4Fe-4S] cluster is required as a cofactor.

This is an uncharacterized protein from Methanocaldococcus jannaschii (strain ATCC 43067 / DSM 2661 / JAL-1 / JCM 10045 / NBRC 100440) (Methanococcus jannaschii).